The sequence spans 229 residues: CRISPR pre-crRNA endoribonuclease Cas5d (229 aa).

Belongs to the CRISPR-associated protein Cas5 family. Subtype I-C/Dvulg subfamily. The cofactor is Does not require a metal cofactor..

Functionally, CRISPR (clustered regularly interspaced short palindromic repeat) is an adaptive immune system that provides protection against mobile genetic elements (viruses, transposable elements and conjugative plasmids). CRISPR clusters contain spacers, sequences complementary to antecedent mobile elements, and target invading nucleic acids. CRISPR clusters are transcribed and processed into CRISPR RNA (crRNA). This protein is a sequence-specific endonuclease that cleaves pre-crRNA into mature crRNA, possibly by an intramolecular attack of the 2'-hydroxyl group of G26 on the scissile phosphodiester, cutting the precursor 3' to G26 residue yielding 5'-hydroxyl and 2' and/or 3' ends lacking a hydroxyl group (perhaps a 2'/3' cyclic phosphodiester). Requires between 4 and 8 nt downstream of the cleavage site for both binding and cleavage of pre-crRNA. Substitution with dG at this position abolishes cleavage but not RNA binding. Does not cleave pre-crRNA associated with the M.succiniciproducens strain MBEL55E Cas5 protein (AC Q65TW5) CRISPR locus. The chain is CRISPR pre-crRNA endoribonuclease Cas5d from Thermus thermophilus (strain ATCC BAA-163 / DSM 7039 / HB27).